Here is a 172-residue protein sequence, read N- to C-terminus: Peptide deformylase (172 aa).

Cys92 and His134 together coordinate Fe cation. Residue Glu135 is part of the active site. Fe cation is bound at residue His138.

The protein belongs to the polypeptide deformylase family. It depends on Fe(2+) as a cofactor.

It carries out the reaction N-terminal N-formyl-L-methionyl-[peptide] + H2O = N-terminal L-methionyl-[peptide] + formate. Functionally, removes the formyl group from the N-terminal Met of newly synthesized proteins. Requires at least a dipeptide for an efficient rate of reaction. N-terminal L-methionine is a prerequisite for activity but the enzyme has broad specificity at other positions. The polypeptide is Peptide deformylase (Saccharophagus degradans (strain 2-40 / ATCC 43961 / DSM 17024)).